We begin with the raw amino-acid sequence, 119 residues long: MIRGIGVDIVKVDRINEKNVQKILSQKEKEIYDTFKGQKRKKEYAAGRFAVKESLIKCFKRFIPYSQITVLNKQSGEPYLDEESVKYLFEKFGGNGTIHISIAHEREFAVATAVVIDED.

Mg(2+)-binding residues include Asp8 and Glu53.

It belongs to the P-Pant transferase superfamily. AcpS family. Requires Mg(2+) as cofactor.

The protein resides in the cytoplasm. The catalysed reaction is apo-[ACP] + CoA = holo-[ACP] + adenosine 3',5'-bisphosphate + H(+). Its function is as follows. Transfers the 4'-phosphopantetheine moiety from coenzyme A to a Ser of acyl-carrier-protein. The chain is Holo-[acyl-carrier-protein] synthase from Petrotoga mobilis (strain DSM 10674 / SJ95).